An 808-amino-acid chain; its full sequence is Auxin response factor 4 (808 aa).

Pro residues predominate over residues 1–13 (MPPAAMAPPPPPQ). Residues 1–20 (MPPAAMAPPPPPQGSSTGDP) form a disordered region. Positions 129–231 (FCKTLTASDT…ELRVGVRRAM (103 aa)) form a DNA-binding region, TF-B3. Residues 342 to 352 (PSTIPRPDRVS) show a composition bias toward basic and acidic residues. 3 disordered regions span residues 342-433 (PSTI…DSDV), 661-691 (TAGTATENEKSGQQAQQSSKDVQSKTQVAST), and 778-808 (QKMNSKSNAPRKDDSSENEKGHLPMPNKSDN). The span at 402 to 432 (AQAQRSQNSTVLQGQEQMTLRSNLTESNDSD) shows a compositional bias: polar residues. The PB1 domain occupies 692-785 (RSCTKVHKQG…EVQKMNSKSN (94 aa)). The span at 787-799 (PRKDDSSENEKGH) shows a compositional bias: basic and acidic residues.

It belongs to the ARF family. Homodimers and heterodimers. In terms of tissue distribution, expressed in roots, culms, leaves and young panicles.

Its subcellular location is the nucleus. Functionally, auxin response factors (ARFs) are transcriptional factors that bind specifically to the DNA sequence 5'-TGTCTC-3' found in the auxin-responsive promoter elements (AuxREs). This Oryza sativa subsp. japonica (Rice) protein is Auxin response factor 4 (ARF4).